Here is a 101-residue protein sequence, read N- to C-terminus: Large ribosomal subunit protein uL23 (101 aa).

This sequence belongs to the universal ribosomal protein uL23 family. As to quaternary structure, part of the 50S ribosomal subunit. Contacts protein L29, and trigger factor when it is bound to the ribosome.

Functionally, one of the early assembly proteins it binds 23S rRNA. One of the proteins that surrounds the polypeptide exit tunnel on the outside of the ribosome. Forms the main docking site for trigger factor binding to the ribosome. This chain is Large ribosomal subunit protein uL23, found in Aromatoleum aromaticum (strain DSM 19018 / LMG 30748 / EbN1) (Azoarcus sp. (strain EbN1)).